A 1133-amino-acid chain; its full sequence is Protein TPR3 (1133 aa).

The LisH domain occupies 4–36 (LSRELVFLILQFLDEEKFKETVHKLEQESGFYF). Residues 34–92 (FYFNMKYFEDEVINGNWDEVERYLGGFTKVDDNRYSMKIFFEIRKQKYLEALDKHDRSK) enclose the CTLH domain. Positions 287–307 (PTTANPSMDYPSGDSDHVSKR) are disordered. WD repeat units follow at residues 348–388 (SQGS…RLVL), 410–449 (DPTV…DIRQ), 455–496 (AHVG…KQFT), 499–540 (GHEA…SRVD), 543–586 (APGH…VKRT), 590–629 (FRKR…LLTT), 634–673 (GGLP…RLLR), 771–810 (MRTS…RNSS), 837–875 (NPEE…TMTT), 878–918 (PPPP…VKSK), 921–960 (GHSK…KLKS), and 1014–1053 (ENSS…LQCR). The interval 1099 to 1133 (ESERKWGNPPPAENGSTSALSTPPNGASSSDQPER) is disordered. Over residues 1112-1133 (NGSTSALSTPPNGASSSDQPER) the composition is skewed to polar residues.

In terms of assembly, tetramer. Interacts with D53. Interacts with MODD and HDAC1. Interacts with WOX1. Interacts with MOF1. In terms of tissue distribution, expressed in panicles, stems, leaves, spikelets and seed endosperm.

Functionally, probable downstream regulator of strigolactones signaling. Functions in a complex with MODD and HDAC1 to down-regulate the histone acetylation level at BZIP46 target genes. BZIP46 is a positive regulator of abscisic acid (ABA) signaling and drought stress tolerance. The sequence is that of Protein TPR3 from Oryza sativa subsp. japonica (Rice).